A 118-amino-acid polypeptide reads, in one-letter code: Large ribosomal subunit protein bL20 (118 aa).

It belongs to the bacterial ribosomal protein bL20 family.

Its function is as follows. Binds directly to 23S ribosomal RNA and is necessary for the in vitro assembly process of the 50S ribosomal subunit. It is not involved in the protein synthesizing functions of that subunit. The sequence is that of Large ribosomal subunit protein bL20 from Ralstonia pickettii (strain 12J).